The primary structure comprises 219 residues: MTNILIVEDEQNLARFIELELTHENYTVDIENDGKVGLDKALSKPYDLYILDLMLPNINGLEICRQIRQKTTTPIIIITAKSETYDKVAGLDYGADDYIVKPFDIEELLARIRAVLRRQPDKDVLDINGIIIDKDAFKVTVNGHQLELTKTEYDLLYVLAENRNHVMQREQILDHVWGYNSEVETNVVDVYIRYLRNKLKPFNKEKSIETVRGVGYVIR.

One can recognise a Response regulatory domain in the interval 3 to 116 (NILIVEDEQN…ELLARIRAVL (114 aa)). A 4-aspartylphosphate modification is found at Asp-52. The ompR/PhoB-type DNA-binding region spans 122 to 219 (KDVLDINGII…TVRGVGYVIR (98 aa)).

In terms of processing, phosphorylated by ArlS.

It is found in the cytoplasm. Functionally, member of the two-component regulatory system ArlS/ArlR. The polypeptide is Response regulator ArlR (arlR) (Staphylococcus epidermidis (strain ATCC 12228 / FDA PCI 1200)).